The chain runs to 55 residues: ATP synthase protein 8 (55 aa).

Residues 6–26 (PHPWFAILVFSWIFFLVILPK) traverse the membrane as a helical segment.

The protein belongs to the ATPase protein 8 family. As to quaternary structure, F-type ATPases have 2 components, CF(1) - the catalytic core - and CF(0) - the membrane proton channel.

It localises to the mitochondrion membrane. Mitochondrial membrane ATP synthase (F(1)F(0) ATP synthase or Complex V) produces ATP from ADP in the presence of a proton gradient across the membrane which is generated by electron transport complexes of the respiratory chain. F-type ATPases consist of two structural domains, F(1) - containing the extramembraneous catalytic core and F(0) - containing the membrane proton channel, linked together by a central stalk and a peripheral stalk. During catalysis, ATP synthesis in the catalytic domain of F(1) is coupled via a rotary mechanism of the central stalk subunits to proton translocation. Part of the complex F(0) domain. Minor subunit located with subunit a in the membrane. The sequence is that of ATP synthase protein 8 (MT-ATP8) from Squalus acanthias (Spiny dogfish).